The primary structure comprises 164 residues: Protein eva-1 homolog B (164 aa).

The chain crosses the membrane as a helical span at residues 29–49 (GLYFVLGVCFGLLLTLCLLVI). Residues 56-110 (RSRPRTPAPRRDPRSSTLEPEDEDDEEDEDTMTRLGPDDTLQGQELSTEPDGPLS) are disordered. Acidic residues predominate over residues 74–85 (EPEDEDDEEDED). Phosphothreonine occurs at positions 86, 149, and 157.

It belongs to the EVA1 family.

It localises to the membrane. This chain is Protein eva-1 homolog B (Eva1b), found in Mus musculus (Mouse).